We begin with the raw amino-acid sequence, 622 residues long: 1-deoxy-D-xylulose-5-phosphate synthase (622 aa).

Residues H71 and 112-114 each bind thiamine diphosphate; that span reads GHS. Residue D143 coordinates Mg(2+). Thiamine diphosphate contacts are provided by residues 144–145, N172, Y283, and E363; that span reads GA. Residue N172 participates in Mg(2+) binding.

It belongs to the transketolase family. DXPS subfamily. Homodimer. Mg(2+) serves as cofactor. It depends on thiamine diphosphate as a cofactor.

It carries out the reaction D-glyceraldehyde 3-phosphate + pyruvate + H(+) = 1-deoxy-D-xylulose 5-phosphate + CO2. It functions in the pathway metabolic intermediate biosynthesis; 1-deoxy-D-xylulose 5-phosphate biosynthesis; 1-deoxy-D-xylulose 5-phosphate from D-glyceraldehyde 3-phosphate and pyruvate: step 1/1. Its function is as follows. Catalyzes the acyloin condensation reaction between C atoms 2 and 3 of pyruvate and glyceraldehyde 3-phosphate to yield 1-deoxy-D-xylulose-5-phosphate (DXP). This chain is 1-deoxy-D-xylulose-5-phosphate synthase, found in Caldanaerobacter subterraneus subsp. tengcongensis (strain DSM 15242 / JCM 11007 / NBRC 100824 / MB4) (Thermoanaerobacter tengcongensis).